The sequence spans 391 residues: CBS domain-containing protein CBSX5 (391 aa).

CBS domains follow at residues 16–81 (GKPP…DHDH) and 331–391 (MARK…ENDM).

The polypeptide is CBS domain-containing protein CBSX5 (CBSX5) (Arabidopsis thaliana (Mouse-ear cress)).